Consider the following 101-residue polypeptide: UPF0473 protein SUB1774 (101 aa).

It belongs to the UPF0473 family.

The chain is UPF0473 protein SUB1774 from Streptococcus uberis (strain ATCC BAA-854 / 0140J).